Reading from the N-terminus, the 128-residue chain is Disintegrin ocellatusin (128 aa).

An N-terminal signal peptide occupies residues 1-20; that stretch reads MIPVLLVTICLAVFPFQGSS. The propeptide occupies 21–65; that stretch reads IILESGNINDYEIVYPKKVAVLPTGAMNSAHPCYDPVTCQPKEKE. Residues 26-112 form the Disintegrin domain; that stretch reads GNINDYEIVY…DCPRNPYKGE (87 aa). Cystine bridges form between Cys53-Cys59, Cys67-Cys76, Cys72-Cys97, Cys73-Cys102, and Cys85-Cys104. Residues 89-91 carry the Cell attachment site motif; the sequence is RGD. The propeptide occupies 116–128; that stretch reads MEWPAPAKGSVLM.

In terms of assembly, monomer. Expressed by the venom gland.

It localises to the secreted. The disintegrin ocellatusin-10c1 is a poor inhibitor of platelet aggregation. The disintegrin inhibits the adhesion of cells expressing the RGD-dependent integrin alpha-5/beta-1 (ITGA5/ITGB1) to immobilized fibronectin. Inhibition on alpha-2b/beta-3 (ITGA2B/ITGB3) is low, and there is no inhibition on alpha-1/beta-1 (ITGA1/ITGB1), alpha-2/beta-1 (ITGA2/ITGB1) and alpha-6/beta-1 (ITGA6/ITGB1). Its function is as follows. The short monomeric disintegrin ocellatusin inhibits ADP-induced platelet aggregation (IC(50)=168 nM). Inhibits alpha-5/beta-1 (ITGA5/ITGB1) integrin and induces the expression of a ligand-induced binding site epitope on beta-1 integrin subunit. Has a direct chemotactic stimulus on human neutrophils in vitro. The sequence is that of Disintegrin ocellatusin from Echis ocellatus (Ocellated saw-scaled viper).